Consider the following 198-residue polypeptide: Recombination protein RecR (198 aa).

The C4-type zinc finger occupies 59 to 74 (CSLCCNYTDHDPCPIC). Residues 82–175 (TLLCIVEQPR…KVTRIAHGLP (94 aa)) enclose the Toprim domain.

This sequence belongs to the RecR family.

Its function is as follows. May play a role in DNA repair. It seems to be involved in an RecBC-independent recombinational process of DNA repair. It may act with RecF and RecO. In Desulfitobacterium hafniense (strain Y51), this protein is Recombination protein RecR.